The chain runs to 192 residues: Thymidylate kinase (192 aa).

Position 7–14 (7–14 (GIDCVGKS)) interacts with ATP.

The protein belongs to the thymidylate kinase family.

The catalysed reaction is dTMP + ATP = dTDP + ADP. In terms of biological role, phosphorylation of dTMP to form dTDP in both de novo and salvage pathways of dTTP synthesis. The protein is Thymidylate kinase (tmk) of Campylobacter jejuni subsp. jejuni serotype O:2 (strain ATCC 700819 / NCTC 11168).